Reading from the N-terminus, the 251-residue chain is DNA-directed RNA polymerase III subunit RPC7 (251 aa).

Positions 186 to 251 are disordered; that stretch reads DDASTGDGAA…EEDPNEEAAF (66 aa). S189 bears the Phosphoserine mark. 2 stretches are compositionally biased toward acidic residues: residues 203–225 and 234–251; these read GEDDDLADDDFEEDEDEEDDDDY and GDDDDYGDEEDPNEEAAF.

Belongs to the eukaryotic RPC7 RNA polymerase subunit family. In terms of assembly, component of the RNA polymerase III (Pol III) complex consisting of 17 subunits.

It is found in the nucleus. Its function is as follows. DNA-dependent RNA polymerase catalyzes the transcription of DNA into RNA using the four ribonucleoside triphosphates as substrates. Specific peripheric component of RNA polymerase III which synthesizes small RNAs, such as 5S rRNA and tRNAs. C31 is involved in the formation of the initiation complex. This Saccharomyces cerevisiae (strain ATCC 204508 / S288c) (Baker's yeast) protein is DNA-directed RNA polymerase III subunit RPC7 (RPC31).